The primary structure comprises 502 residues: 1-aminocyclopropane-1-carboxylate synthase-like protein 1 (502 aa).

Residues 15–35 (CPGSDSIQDLPSNKGDGLERE) are disordered. Residue E106 participates in substrate binding. K324 is modified (N6-(pyridoxal phosphate)lysine).

This sequence belongs to the class-I pyridoxal-phosphate-dependent aminotransferase family.

In terms of biological role, does not catalyze the synthesis of 1-aminocyclopropane-1-carboxylate but is capable of catalyzing the deamination of L-vinylglycine. The protein is 1-aminocyclopropane-1-carboxylate synthase-like protein 1 (ACCS) of Bos taurus (Bovine).